The sequence spans 932 residues: DNA mismatch repair protein MutS (932 aa).

615-622 (GPNMAGKS) is an ATP binding site.

It belongs to the DNA mismatch repair MutS family.

In terms of biological role, this protein is involved in the repair of mismatches in DNA. It is possible that it carries out the mismatch recognition step. This protein has a weak ATPase activity. The chain is DNA mismatch repair protein MutS from Clostridium botulinum (strain Langeland / NCTC 10281 / Type F).